Consider the following 237-residue polypeptide: Class B acid phosphatase (237 aa).

A signal peptide spans 1-23 (MKKITLALSAVCLLFTLNHSANA). Catalysis depends on Asp-69, which acts as the Nucleophile. Asp-69 and Asp-71 together coordinate Mg(2+). Asp-71 serves as the catalytic Proton donor. Residues 137-138 (TG) and Lys-177 each bind substrate. Asp-192 is a Mg(2+) binding site.

The protein belongs to the class B bacterial acid phosphatase family. Homotetramer. Requires Mg(2+) as cofactor.

The protein localises to the periplasm. The enzyme catalyses a phosphate monoester + H2O = an alcohol + phosphate. Its activity is regulated as follows. Nucleosides, and particularly 2'-deoxyribonucleosides, are potent inhibitors of the phosphatase activity. The phosphatase activity is also inhibited by inorganic phosphate and EDTA in vitro. Dephosphorylates several organic phosphate monoesters such as 3'-UMP, 5'-UMP and pNPP. Also has a phosphotransferase activity catalyzing the transfer of low-energy phosphate groups from organic phosphate monoesters to free hydroxyl groups of various organic compounds such as the 2'-, 3-, or 5'-hydroxyls of nucleosides and nucleotides. Also displays significant phosphomutase activity since it is able to catalyze the transfer of the phosphate group of 3'-AMP from the 3'-position both to the 2'- and 5'-positions. One of the physiological functions of the phosphohydrolytic activity of the enzyme is believed to be the scavenging of organic phosphate esters that otherwise cannot pass the cytoplasmic membrane. The sequence is that of Class B acid phosphatase (aphA) from Salmonella typhimurium (strain LT2 / SGSC1412 / ATCC 700720).